We begin with the raw amino-acid sequence, 347 residues long: Heat-inducible transcription repressor HrcA (347 aa).

This sequence belongs to the HrcA family.

Negative regulator of class I heat shock genes (grpE-dnaK-dnaJ and groELS operons). Prevents heat-shock induction of these operons. In Mycobacterium sp. (strain JLS), this protein is Heat-inducible transcription repressor HrcA.